The chain runs to 91 residues: Cell division topological specificity factor (91 aa).

This sequence belongs to the MinE family.

Prevents the cell division inhibition by proteins MinC and MinD at internal division sites while permitting inhibition at polar sites. This ensures cell division at the proper site by restricting the formation of a division septum at the midpoint of the long axis of the cell. This chain is Cell division topological specificity factor, found in Chloroflexus aurantiacus (strain ATCC 29366 / DSM 635 / J-10-fl).